The sequence spans 406 residues: Tyrosine--tRNA ligase (406 aa).

Residue Tyr-35 coordinates L-tyrosine. The short motif at 40 to 49 is the 'HIGH' region element; it reads ATSASLHIGH. Tyr-167 and Gln-171 together coordinate L-tyrosine. The 'KMSKS' region motif lies at 227–231; the sequence is KMGKS. Lys-230 lines the ATP pocket. The S4 RNA-binding domain maps to 341–405; it reads ILLVDLMVLA…IGKKKILRIV (65 aa).

The protein belongs to the class-I aminoacyl-tRNA synthetase family. TyrS type 1 subfamily. Homodimer.

The protein resides in the cytoplasm. The enzyme catalyses tRNA(Tyr) + L-tyrosine + ATP = L-tyrosyl-tRNA(Tyr) + AMP + diphosphate + H(+). Its function is as follows. Catalyzes the attachment of tyrosine to tRNA(Tyr) in a two-step reaction: tyrosine is first activated by ATP to form Tyr-AMP and then transferred to the acceptor end of tRNA(Tyr). The chain is Tyrosine--tRNA ligase from Borrelia duttonii (strain Ly).